The primary structure comprises 231 residues: MTVLTDKIAVVTGAGSGIGEAIATLLHEEGAKVVLAGRNKEKLQNVANQLSQDSVKVVPTDVTNKEEVDELIKIAQQTFGGLDIVINSAGQMLSSKITDYQVDEWDSMIDVNIKGTLYTVQAALPTMLEQSSGHLINIASISGFEVTKSSTIYSATKAAVHTITQGLEKELAKTGVKVTSISPGMVDTAITAAYNPSDRKKLDPQDIAEAVLYALTQPSHVNVNEITVRPV.

10–34 (VVTGAGSGIGEAIATLLHEEGAKVV) provides a ligand contact to NADP(+). Substrate is bound at residue serine 140. Tyrosine 153 (proton acceptor) is an active-site residue.

This sequence belongs to the short-chain dehydrogenases/reductases (SDR) family.

This is an uncharacterized protein from Staphylococcus aureus (strain MW2).